A 463-amino-acid polypeptide reads, in one-letter code: Alpha-L-arabinofuranosidase B (463 aa).

Residues 1–26 form the signal peptide; that stretch reads MIPQLNRNYAWAIALGLVARSSLVSA. Residues 27 to 308 form a catalytic region; it reads GPCDIYASGG…ILGIGGHNSK (282 aa). An intrachain disulfide couples Cys29 to Cys39. Residue Asn81 is glycosylated (N-linked (GlcNAc...) asparagine). 2 disulfide bridges follow: Cys89–Cys94 and Cys184–Cys185. Asp227 provides a ligand contact to substrate. The active-site Nucleophile is the Glu229. Residue Asn230 coordinates substrate. A glycan (N-linked (GlcNAc...) asparagine) is linked at Asn280. Gly304 serves as a coordination point for substrate. Residues 309-463 are ABD; sequence LTVGSSISLR…VSWVVSASFA (155 aa). Asn332 carries N-linked (GlcNAc...) asparagine glycosylation. An intrachain disulfide couples Cys366 to Cys404. The substrate site is built by His381, Asn383, Phe384, His428, Asp430, Leu433, and Asp453.

This sequence belongs to the glycosyl hydrolase 54 family. In terms of processing, residue Asn-280 is mannosylated with up to 7 mannose residues.

The protein resides in the secreted. It carries out the reaction Hydrolysis of terminal non-reducing alpha-L-arabinofuranoside residues in alpha-L-arabinosides.. The protein operates within glycan metabolism; L-arabinan degradation. Its function is as follows. Secreted alpha-L-arabinofuranosidase that actively hydrolyzes p-NP-alpha-L-arabinofuranoside and is specific for furanose configuration of the carbohydrate ring. Also exhibits significant activity against polymeric arabinose-containing substrates such as arabinan and arabinoxylan, a major component of plant hemicellulose. This chain is Alpha-L-arabinofuranosidase B (abfB), found in Penicillium canescens.